We begin with the raw amino-acid sequence, 713 residues long: P-loop NTPase domain-containing protein LPA1 homolog (713 aa).

3 disordered regions span residues 218-249 (AKKRSGISTTSTIDFDKTRPLNDKPDGKPIGK), 504-575 (TSQA…EDLS), and 650-713 (LDSP…APDK). A compositionally biased stretch (basic and acidic residues) spans 231–246 (DFDKTRPLNDKPDGKP). Polar residues predominate over residues 504–531 (TSQAGSVNESWDNANEGTGSHVPSSSGS). The segment covering 533–544 (KKLDGHCKEIKE) has biased composition (basic and acidic residues). The span at 551–562 (SDDDEEEEEEAA) shows a compositional bias: acidic residues. The span at 656 to 668 (ARSSSALPISASS) shows a compositional bias: low complexity.

Its function is as follows. Required for the accumulation of phytic acid in seeds. Phytic acid is the primary storage form of phosphorus in cereal grains and other plant seeds. This Oryza sativa subsp. japonica (Rice) protein is P-loop NTPase domain-containing protein LPA1 homolog.